Reading from the N-terminus, the 467-residue chain is ATP-dependent protease ATPase subunit HslU (467 aa).

Residues Ile-20, 62 to 67, Asp-280, Glu-345, and Arg-417 contribute to the ATP site; that span reads GVGKTE.

It belongs to the ClpX chaperone family. HslU subfamily. As to quaternary structure, a double ring-shaped homohexamer of HslV is capped on each side by a ring-shaped HslU homohexamer. The assembly of the HslU/HslV complex is dependent on binding of ATP.

Its subcellular location is the cytoplasm. ATPase subunit of a proteasome-like degradation complex; this subunit has chaperone activity. The binding of ATP and its subsequent hydrolysis by HslU are essential for unfolding of protein substrates subsequently hydrolyzed by HslV. HslU recognizes the N-terminal part of its protein substrates and unfolds these before they are guided to HslV for hydrolysis. In Ligilactobacillus salivarius (strain UCC118) (Lactobacillus salivarius), this protein is ATP-dependent protease ATPase subunit HslU.